A 34-amino-acid chain; its full sequence is Brevinin-2Rf (34 aa).

Cysteine 28 and cysteine 34 are joined by a disulfide.

Expressed by the skin glands.

The protein localises to the secreted. Its function is as follows. Antimicrobial peptide. The sequence is that of Brevinin-2Rf from Pelophylax ridibundus (Marsh frog).